The following is a 60-amino-acid chain: Large ribosomal subunit protein uL30 (60 aa).

It belongs to the universal ribosomal protein uL30 family. As to quaternary structure, part of the 50S ribosomal subunit.

The sequence is that of Large ribosomal subunit protein uL30 from Paraburkholderia phytofirmans (strain DSM 17436 / LMG 22146 / PsJN) (Burkholderia phytofirmans).